The following is a 319-amino-acid chain: Homoserine dehydrogenase (319 aa).

NADPH contacts are provided by Phe-10, Thr-12, Val-13, Arg-40, Lys-57, Ser-92, Ser-93, Ser-114, and Lys-116. Val-13 contributes to the NAD(+) binding site. Positions 13 and 40 each coordinate NADP(+). Ser-92 contacts NAD(+). Ser-92 lines the NADP(+) pocket. Residues Ser-114 and Lys-116 each contribute to the NADP(+) site. Glu-140, Val-143, Ala-145, and Thr-147 together coordinate Na(+). Residues Gly-197 and Glu-200 each contribute to the NADP(+) site. The L-homoserine site is built by Glu-200 and Asp-211. The Proton donor role is filled by Lys-215. Residue Gly-296 coordinates NADPH. Gly-296 is a binding site for NAD(+). Gly-296 contributes to the NADP(+) binding site.

It belongs to the homoserine dehydrogenase family. Homodimer. A metal cation serves as cofactor.

It catalyses the reaction L-homoserine + NAD(+) = L-aspartate 4-semialdehyde + NADH + H(+). Its pathway is amino-acid biosynthesis; L-methionine biosynthesis via de novo pathway; L-homoserine from L-aspartate: step 3/3. It participates in amino-acid biosynthesis; L-threonine biosynthesis; L-threonine from L-aspartate: step 3/5. Its function is as follows. Catalyzes the conversion of L-aspartate-beta-semialdehyde (L-Asa) to L-homoserine (L-Hse), the third step in the biosynthesis of threonine and methionine from aspartate. Utilizes NADH but not NADPH as coenzyme. The protein is Homoserine dehydrogenase of Pyrococcus horikoshii (strain ATCC 700860 / DSM 12428 / JCM 9974 / NBRC 100139 / OT-3).